The chain runs to 353 residues: uncharacterized protein (353 aa).

The segment covering 233–245 (ASCSNNEPSASLE) has biased composition (polar residues). The disordered stretch occupies residues 233-265 (ASCSNNEPSASLESESRHFSPVNSLSPSSLSTD). Residues 252–263 (SPVNSLSPSSLS) are compositionally biased toward low complexity.

This is an uncharacterized protein from Saccharomyces cerevisiae (strain ATCC 204508 / S288c) (Baker's yeast).